A 672-amino-acid polypeptide reads, in one-letter code: tRNA 5-methylaminomethyl-2-thiouridine biosynthesis bifunctional protein MnmC (672 aa).

Positions 1 to 235 (MTRVLEPAEP…KRDMTVARFA (235 aa)) are tRNA (mnm(5)s(2)U34)-methyltransferase. Residues 259–672 (IGAGLAGCAV…SAGPGVDAAG (414 aa)) form an FAD-dependent cmnm(5)s(2)U34 oxidoreductase region.

The protein in the N-terminal section; belongs to the methyltransferase superfamily. tRNA (mnm(5)s(2)U34)-methyltransferase family. In the C-terminal section; belongs to the DAO family. Requires FAD as cofactor.

The protein resides in the cytoplasm. It catalyses the reaction 5-aminomethyl-2-thiouridine(34) in tRNA + S-adenosyl-L-methionine = 5-methylaminomethyl-2-thiouridine(34) in tRNA + S-adenosyl-L-homocysteine + H(+). Functionally, catalyzes the last two steps in the biosynthesis of 5-methylaminomethyl-2-thiouridine (mnm(5)s(2)U) at the wobble position (U34) in tRNA. Catalyzes the FAD-dependent demodification of cmnm(5)s(2)U34 to nm(5)s(2)U34, followed by the transfer of a methyl group from S-adenosyl-L-methionine to nm(5)s(2)U34, to form mnm(5)s(2)U34. In Cupriavidus metallidurans (strain ATCC 43123 / DSM 2839 / NBRC 102507 / CH34) (Ralstonia metallidurans), this protein is tRNA 5-methylaminomethyl-2-thiouridine biosynthesis bifunctional protein MnmC.